The following is a 423-amino-acid chain: Imidazolonepropionase (423 aa).

Fe(3+) contacts are provided by His78 and His80. Residues His78 and His80 each contribute to the Zn(2+) site. 4-imidazolone-5-propanoate-binding residues include Arg87, Tyr150, and His183. Tyr150 is a binding site for N-formimidoyl-L-glutamate. His247 is a binding site for Fe(3+). His247 serves as a coordination point for Zn(2+). Glu250 serves as a coordination point for 4-imidazolone-5-propanoate. Asp322 lines the Fe(3+) pocket. Asp322 is a binding site for Zn(2+). Residues Asn324 and Gly326 each coordinate N-formimidoyl-L-glutamate. Residue Ser327 coordinates 4-imidazolone-5-propanoate.

Belongs to the metallo-dependent hydrolases superfamily. HutI family. The cofactor is Zn(2+). Requires Fe(3+) as cofactor.

The protein resides in the cytoplasm. The enzyme catalyses 4-imidazolone-5-propanoate + H2O = N-formimidoyl-L-glutamate. Its pathway is amino-acid degradation; L-histidine degradation into L-glutamate; N-formimidoyl-L-glutamate from L-histidine: step 3/3. Catalyzes the hydrolytic cleavage of the carbon-nitrogen bond in imidazolone-5-propanoate to yield N-formimidoyl-L-glutamate. It is the third step in the universal histidine degradation pathway. The polypeptide is Imidazolonepropionase (Bacillus cereus (strain ATCC 14579 / DSM 31 / CCUG 7414 / JCM 2152 / NBRC 15305 / NCIMB 9373 / NCTC 2599 / NRRL B-3711)).